Reading from the N-terminus, the 929-residue chain is Dual serine/threonine and tyrosine protein kinase (929 aa).

Low complexity predominate over residues 1-14 (MEGDGVPWGSEPVS). The interval 1–21 (MEGDGVPWGSEPVSGPGPGGG) is disordered. 2 coiled-coil regions span residues 189-215 (EEDLEVQENNEDAAHVLAELEVTMHHA) and 395-431 (RKKENELYESLMNIANRKQEEMKDMIVETLNTMKEEL). The region spanning 652–906 (PKLGQELGRG…PLLGIVQPML (255 aa)) is the Protein kinase domain. Residues 658–666 (LGRGQYGVV) and Lys681 each bind ATP. The active-site Proton acceptor is the Asp777.

This sequence belongs to the protein kinase superfamily. Ser/Thr protein kinase family. Predominantly expressed in skeletal muscle and testis. Expressed in basolateral and apical membranes of all tubular epithelia. Expressed in thin ascending limb of the loop of Henle and the distal convoluted tubule. Expressed in all layers of transitional ureteric epithelium and in the ureteric smooth-muscle cells. Weakly expressed in heart, brain, placenta, kidney, pancreas, spleen, thymus, prostate, uterus, small intestine, white blood cells, stomach, spinal cord and adrenal gland. Is widely distributed in the CNS. Also detected in several tumor cell lines. Expressed in the skin.

Its subcellular location is the cytoplasm. The protein resides in the cell membrane. It localises to the apical cell membrane. It is found in the basolateral cell membrane. The protein localises to the cell junction. The catalysed reaction is L-seryl-[protein] + ATP = O-phospho-L-seryl-[protein] + ADP + H(+). It carries out the reaction L-threonyl-[protein] + ATP = O-phospho-L-threonyl-[protein] + ADP + H(+). It catalyses the reaction L-tyrosyl-[protein] + ATP = O-phospho-L-tyrosyl-[protein] + ADP + H(+). In terms of biological role, acts as a positive regulator of ERK phosphorylation downstream of fibroblast growth factor-receptor activation. Involved in the regulation of both caspase-dependent apoptosis and caspase-independent cell death. In the skin, it plays a predominant role in suppressing caspase-dependent apoptosis in response to UV stress in a range of dermal cell types. The protein is Dual serine/threonine and tyrosine protein kinase (DSTYK) of Homo sapiens (Human).